The following is a 434-amino-acid chain: Protein TolB homolog (434 aa).

Positions 1 to 27 are cleaved as a signal peptide; sequence MRSTRNSFACLCIMLFGMLFVPFTLRA. Residues 413–434 form a disordered region; that stretch reads SNQRPLLNMQGEQQQPSWSVSK.

The protein belongs to the TolB family.

The protein localises to the periplasm. The protein is Protein TolB homolog of Chlorobaculum tepidum (strain ATCC 49652 / DSM 12025 / NBRC 103806 / TLS) (Chlorobium tepidum).